A 109-amino-acid polypeptide reads, in one-letter code: Aquaporin-2 (109 aa).

The Cytoplasmic segment spans residues 1–6 (SIAFSR). The helical transmembrane segment at 7-27 (AVFAEFLATLIFVFFGLGSAL) threads the bilayer. Over 28–35 (NWQQSLPS) the chain is Extracellular. The chain crosses the membrane as a helical span at residues 36 to 54 (VLQIAMAFGLAIGTLVQAL). Over 55 to 59 (GHISG) the chain is Cytoplasmic. The segment at residues 60 to 69 (AHINPAVTVA) is an intramembrane region (discontinuously helical). Residues 63-65 (NPA) carry the NPA 1 motif. The Cytoplasmic segment spans residues 70-80 (CLVGCHVSFLR). A helical transmembrane segment spans residues 81–102 (AAFYVAAQLLGAVAGAALLHEV). The Extracellular portion of the chain corresponds to 103–109 (TPSDVRG).

This sequence belongs to the MIP/aquaporin (TC 1.A.8) family. Homotetramer. Post-translationally, serine phosphorylation is necessary and sufficient for expression at the apical membrane. Endocytosis is not phosphorylation-dependent. In terms of processing, N-glycosylated.

It is found in the apical cell membrane. It localises to the basolateral cell membrane. The protein resides in the cell membrane. The protein localises to the cytoplasmic vesicle membrane. Its subcellular location is the golgi apparatus. It is found in the trans-Golgi network membrane. It catalyses the reaction H2O(in) = H2O(out). It carries out the reaction glycerol(in) = glycerol(out). Its function is as follows. Forms a water-specific channel that provides the plasma membranes of renal collecting duct with high permeability to water, thereby permitting water to move in the direction of an osmotic gradient. Plays an essential role in renal water homeostasis. Could also be permeable to glycerol. The protein is Aquaporin-2 of Talpa europaea (European mole).